The sequence spans 306 residues: Putative S-adenosyl-L-methionine-dependent methyltransferase MAP_4190c (306 aa).

S-adenosyl-L-methionine is bound by residues Asp-129 and 158–159; that span reads DL.

Belongs to the UPF0677 family.

Functionally, exhibits S-adenosyl-L-methionine-dependent methyltransferase activity. This is Putative S-adenosyl-L-methionine-dependent methyltransferase MAP_4190c from Mycolicibacterium paratuberculosis (strain ATCC BAA-968 / K-10) (Mycobacterium paratuberculosis).